The chain runs to 390 residues: 3-ketoacyl-CoA thiolase (390 aa).

The active-site Acyl-thioester intermediate is the cysteine 95. Active-site proton acceptor residues include histidine 346 and cysteine 376.

This sequence belongs to the thiolase-like superfamily. Thiolase family. Heterotetramer of two alpha chains (FadB) and two beta chains (FadA).

The protein resides in the cytoplasm. It carries out the reaction an acyl-CoA + acetyl-CoA = a 3-oxoacyl-CoA + CoA. The protein operates within lipid metabolism; fatty acid beta-oxidation. Functionally, catalyzes the final step of fatty acid oxidation in which acetyl-CoA is released and the CoA ester of a fatty acid two carbons shorter is formed. This chain is 3-ketoacyl-CoA thiolase, found in Psychrobacter cryohalolentis (strain ATCC BAA-1226 / DSM 17306 / VKM B-2378 / K5).